The sequence spans 208 residues: High frequency lysogenization protein HflD homolog (208 aa).

It belongs to the HflD family.

The protein localises to the cytoplasm. The protein resides in the cell inner membrane. This chain is High frequency lysogenization protein HflD homolog, found in Yersinia enterocolitica serotype O:8 / biotype 1B (strain NCTC 13174 / 8081).